The following is a 355-amino-acid chain: tRNA uridine(34) hydroxylase (355 aa).

Positions 146 to 240 (KDPDALFVDM…YVRTAKKKDL (95 aa)) constitute a Rhodanese domain. The Cysteine persulfide intermediate role is filled by C200.

This sequence belongs to the TrhO family.

The enzyme catalyses uridine(34) in tRNA + AH2 + O2 = 5-hydroxyuridine(34) in tRNA + A + H2O. Catalyzes oxygen-dependent 5-hydroxyuridine (ho5U) modification at position 34 in tRNAs. The polypeptide is tRNA uridine(34) hydroxylase (Hamiltonella defensa subsp. Acyrthosiphon pisum (strain 5AT)).